A 439-amino-acid polypeptide reads, in one-letter code: Chromosomal replication initiator protein DnaA (439 aa).

Positions 1–75 (MESWSRCLER…GIREVVLAIG (75 aa)) are domain I, interacts with DnaA modulators. The interval 75–101 (GSRPKTTELTVPVDTTGRLSQTVPFNG) is domain II. Positions 102–319 (NLDTHYNFDN…GALNTLVARA (218 aa)) are domain III, AAA+ region. Positions 147, 149, 150, and 151 each coordinate ATP. The domain IV, binds dsDNA stretch occupies residues 320-439 (NFTGRAVTIE…WDKLMRKFSE (120 aa)).

Belongs to the DnaA family. As to quaternary structure, oligomerizes as a right-handed, spiral filament on DNA at oriC.

It localises to the cytoplasm. Functionally, plays an essential role in the initiation and regulation of chromosomal replication. ATP-DnaA binds to the origin of replication (oriC) to initiate formation of the DNA replication initiation complex once per cell cycle. Binds the DnaA box (a 9 base pair repeat at the origin) and separates the double-stranded (ds)DNA. Forms a right-handed helical filament on oriC DNA; dsDNA binds to the exterior of the filament while single-stranded (ss)DNA is stabiized in the filament's interior. The ATP-DnaA-oriC complex binds and stabilizes one strand of the AT-rich DNA unwinding element (DUE), permitting loading of DNA polymerase. After initiation quickly degrades to an ADP-DnaA complex that is not apt for DNA replication. Binds acidic phospholipids. The polypeptide is Chromosomal replication initiator protein DnaA (Xylella fastidiosa (strain Temecula1 / ATCC 700964)).